The following is a 218-amino-acid chain: Leucine-rich repeat protein 1 (218 aa).

A signal peptide spans 1–27; the sequence is MASRNYRWELFAASLTLTLALIHLVEA. LRR repeat units follow at residues 94-117, 119-140, 141-165, and 167-190; these read EHLQYLELYKNNIQGTIPSELGNL, NLISLDLYNNNLTGIVPTSLGK, LKSLVFLRLNDNRLTGPIPRALTAI, and SLKVVDVSSNDLCGTIPTNGPFAH.

In terms of assembly, interacts with HIR1.

Involved in plant defense response. The chain is Leucine-rich repeat protein 1 from Arabidopsis thaliana (Mouse-ear cress).